Reading from the N-terminus, the 437-residue chain is GTPase Era, mitochondrial (437 aa).

The N-terminal 43 residues, Met1–Cys43, are a transit peptide targeting the mitochondrion. Positions Arg112–Gly330 constitute an Era-type G domain. The interval Gly120–Ser127 is G1. Gly120 to Ser127 lines the GTP pocket. Residues His146–Cys150 form a G2 region. The interval Asp167–Gly170 is G3. Asp167–Ile171 provides a ligand contact to GTP. Ser173 carries the phosphoserine modification. Asn236–Asp239 lines the GTP pocket. Residues Asn236–Asp239 form a G4 region. The disordered stretch occupies residues His271–Ser290. The tract at residues Leu308–Ala310 is G5. In terms of domain architecture, KH type-2 spans Leu360–Lys437.

The protein belongs to the TRAFAC class TrmE-Era-EngA-EngB-Septin-like GTPase superfamily. Era GTPase family.

It is found in the mitochondrion matrix. The protein localises to the mitochondrion inner membrane. Its function is as follows. Probable GTPase that plays a role in the mitochondrial ribosomal small subunit assembly. Specifically binds the 12S mitochondrial rRNA (12S mt-rRNA) to a 33 nucleotide section delineating the 3' terminal stem-loop region. May act as a chaperone that protects the 12S mt-rRNA on the 28S mitoribosomal subunit during ribosomal small subunit assembly. The protein is GTPase Era, mitochondrial (ERAL1) of Homo sapiens (Human).